The sequence spans 403 residues: Prostaglandin D2 receptor 2 (403 aa).

Residues 1–34 are Extracellular-facing; the sequence is MANITLKPLCPLLEEMVQLPNHSNSSLRYIDHVS. Residues Asn-3, Asn-21, and Asn-24 are each glycosylated (N-linked (GlcNAc...) asparagine). A helical membrane pass occupies residues 35-55; it reads VLLHGLASLLGLVENGLILFV. Residues 56–71 are Cytoplasmic-facing; sequence VGCRMRQTVVTTWVLH. Residues 72–92 traverse the membrane as a helical segment; the sequence is LALSDLLAAASLPFFTYFLAV. The Extracellular portion of the chain corresponds to 93 to 104; sequence GHSWELGTTFCK. Cysteines 103 and 198 form a disulfide. Residues 105–125 form a helical membrane-spanning segment; it reads LHSSVFFLNMFASGFLLSAIS. Topologically, residues 126 to 147 are cytoplasmic; sequence LDRCLQVVRPVWAQNHRTVAAA. Residues 148-168 form a helical membrane-spanning segment; that stretch reads HRVCLMLWALAVLNTVPYFVF. Over 169–209 the chain is Extracellular; the sequence is RDTIPRRDGRIMCYYNMLLLNPGSDRDTTCDYRQKALAVSK. The helical transmembrane segment at 210-230 threads the bilayer; the sequence is FLLAFMVPLAIIASSHVAVSL. Topologically, residues 231-245 are cytoplasmic; sequence QLHHRGRQRTGRFVR. Residues 246–266 form a helical membrane-spanning segment; it reads LVAAIVVAFILCWGPYHIFSL. At 267-284 the chain is on the extracellular side; that stretch reads LEARAHSVTTLRQLASRG. The chain crosses the membrane as a helical span at residues 285-305; the sequence is LPFVTSLAFFNSVVNPLLYVL. At 306–403 the chain is on the cytoplasmic side; the sequence is TCPDMLHKLR…KQGSLSCTLD (98 aa). The Involved in the recycling of CRTH2 motif lies at 329-332; sequence DSDL. The residue at position 330 (Ser-330) is a Phosphoserine. 2 disordered regions span residues 332 to 353 and 384 to 403; these read LSTG…STTT and PRRV…CTLD. The segment covering 338–348 has biased composition (basic residues); it reads KRCRRRHRRRA. Ser-349 is subject to Phosphoserine. Positions 393-403 are enriched in polar residues; sequence EKQGSLSCTLD.

This sequence belongs to the G-protein coupled receptor 1 family. Post-translationally, phosphorylated.

The protein resides in the cell membrane. In terms of biological role, receptor for prostaglandin D2 (PGD2). Coupled to the G(i)-protein. Receptor activation may result in pertussis toxin-sensitive decreases in cAMP levels and Ca(2+) mobilization. PI3K signaling is also implicated in mediating PTGDR2 effects. PGD2 induced receptor internalization. CRTH2 internalization can be regulated by diverse kinases such as, PKC, PKA, GRK2, GPRK5/GRK5 and GRK6. Receptor activation is responsible, at least in part, in immune regulation and allergic/inflammation responses. The sequence is that of Prostaglandin D2 receptor 2 (Ptgdr2) from Rattus norvegicus (Rat).